The following is a 322-amino-acid chain: Malate dehydrogenase (322 aa).

NAD(+)-binding positions include 10–15 and aspartate 34; that span reads GSGQIG. Substrate contacts are provided by arginine 83 and arginine 89. NAD(+) is bound by residues asparagine 96 and 119–121; that span reads ITN. Substrate-binding residues include asparagine 121 and arginine 152. The active-site Proton acceptor is histidine 176.

It belongs to the LDH/MDH superfamily. MDH type 3 family.

It carries out the reaction (S)-malate + NAD(+) = oxaloacetate + NADH + H(+). Its function is as follows. Catalyzes the reversible oxidation of malate to oxaloacetate. This is Malate dehydrogenase from Bradyrhizobium sp. (strain BTAi1 / ATCC BAA-1182).